Reading from the N-terminus, the 375-residue chain is Cobalt-precorrin-5B C(1)-methyltransferase (375 aa).

This sequence belongs to the CbiD family.

It carries out the reaction Co-precorrin-5B + S-adenosyl-L-methionine = Co-precorrin-6A + S-adenosyl-L-homocysteine. It functions in the pathway cofactor biosynthesis; adenosylcobalamin biosynthesis; cob(II)yrinate a,c-diamide from sirohydrochlorin (anaerobic route): step 6/10. Catalyzes the methylation of C-1 in cobalt-precorrin-5B to form cobalt-precorrin-6A. The protein is Cobalt-precorrin-5B C(1)-methyltransferase of Fusobacterium nucleatum subsp. nucleatum (strain ATCC 25586 / DSM 15643 / BCRC 10681 / CIP 101130 / JCM 8532 / KCTC 2640 / LMG 13131 / VPI 4355).